The primary structure comprises 1399 residues: Alpha-glucan water dikinase 1, chloroplastic (1399 aa).

The N-terminal 75 residues, 1–75 (MSNSVVHNLL…GRPLSFVPRA (75 aa)), are a transit peptide targeting the chloroplast. Valine 76 carries the N-acetylvaline modification. The disordered stretch occupies residues 265-306 (LLKKDNSNESPKSNGTSSSGREEKKKVSKQPERKKNYNTDKI). Positions 272–283 (NESPKSNGTSSS) are enriched in polar residues. Residues 284 to 306 (GREEKKKVSKQPERKKNYNTDKI) are compositionally biased toward basic and acidic residues. The active-site Tele-phosphohistidine intermediate is the histidine 1004.

The protein belongs to the PEP-utilizing enzyme family. In terms of assembly, homodimer. The cofactor is Mg(2+).

The protein resides in the plastid. It is found in the chloroplast. It catalyses the reaction [(1-&gt;4)-alpha-D-glucosyl](n) + n ATP + n H2O = [(1-&gt;4)-6-phospho-alpha-D-glucosyl](n) + n AMP + n phosphate + 2n H(+). Mediates the incorporation of phosphate into starch-like alpha-glucan, mostly at the C-6 position of glucose units. Acts as an overall regulator of starch mobilization. Required for starch degradation, suggesting that the phosphate content of starch regulates its degradability. The sequence is that of Alpha-glucan water dikinase 1, chloroplastic from Arabidopsis thaliana (Mouse-ear cress).